The chain runs to 343 residues: MSKRPTIAITSGEPAGIGPEISIRAAWELRADVKSILIGDAAFLAMTAAAINPAIRLSALSLQAVRNSGVPDFSRDQIAVIDCPLAAHVVPGKLDAQNGRYVLQTLDIGIEGAQQGWFDAIVTAPLQKSTINDAGVPFTGHTEYLADKTNTAQVVMMLATNATPQPLRVGLATTHLALKDVAAAITIDSLAGILDILLADLQNKFGIAKPRILVAGLNPHAGEGGYLGREEIEVITPVLQAAQAKGFDVRGPYPADTLFQQKYLEDADCVLAMYHDQGLPVLKYASFGLGVNITLGLPLIRTSVDHGTALDLAAAGLGQADHGSMLEAMRIAAQMAAAARTSS.

Residues His141 and Thr142 each contribute to the substrate site. 3 residues coordinate a divalent metal cation: His175, His220, and His275. The substrate site is built by Lys283, Asn292, and Arg301.

The protein belongs to the PdxA family. Homodimer. Zn(2+) is required as a cofactor. It depends on Mg(2+) as a cofactor. Co(2+) serves as cofactor.

It localises to the cytoplasm. It catalyses the reaction 4-(phosphooxy)-L-threonine + NAD(+) = 3-amino-2-oxopropyl phosphate + CO2 + NADH. It participates in cofactor biosynthesis; pyridoxine 5'-phosphate biosynthesis; pyridoxine 5'-phosphate from D-erythrose 4-phosphate: step 4/5. Catalyzes the NAD(P)-dependent oxidation of 4-(phosphooxy)-L-threonine (HTP) into 2-amino-3-oxo-4-(phosphooxy)butyric acid which spontaneously decarboxylates to form 3-amino-2-oxopropyl phosphate (AHAP). The sequence is that of 4-hydroxythreonine-4-phosphate dehydrogenase from Janthinobacterium sp. (strain Marseille) (Minibacterium massiliensis).